Reading from the N-terminus, the 463-residue chain is ATP synthase subunit beta (463 aa).

An ATP-binding site is contributed by 152–159; that stretch reads GGAGVGKT.

The protein belongs to the ATPase alpha/beta chains family. In terms of assembly, F-type ATPases have 2 components, CF(1) - the catalytic core - and CF(0) - the membrane proton channel. CF(1) has five subunits: alpha(3), beta(3), gamma(1), delta(1), epsilon(1). CF(0) has three main subunits: a(1), b(2) and c(9-12). The alpha and beta chains form an alternating ring which encloses part of the gamma chain. CF(1) is attached to CF(0) by a central stalk formed by the gamma and epsilon chains, while a peripheral stalk is formed by the delta and b chains.

Its subcellular location is the cell inner membrane. The catalysed reaction is ATP + H2O + 4 H(+)(in) = ADP + phosphate + 5 H(+)(out). In terms of biological role, produces ATP from ADP in the presence of a proton gradient across the membrane. The catalytic sites are hosted primarily by the beta subunits. The protein is ATP synthase subunit beta of Shewanella sp. (strain MR-7).